The primary structure comprises 57 residues: Potassium channel toxin alpha-KTx 8.7 (57 aa).

Residues 1–28 form the signal peptide; that stretch reads MSRLYAIILIALVFNVIMTIMPDMKVEA. 3 cysteine pairs are disulfide-bonded: Cys31-Cys47, Cys34-Cys52, and Cys38-Cys54.

As to expression, expressed by the venom gland.

It is found in the secreted. In terms of biological role, inhibits voltage-gated potassium channel rKv1.1/KCNA1 at nanomolar ranges (IC(50)=8.5 nM). This Mesobuthus eupeus (Lesser Asian scorpion) protein is Potassium channel toxin alpha-KTx 8.7.